The sequence spans 436 residues: Phosphoribosylamine--glycine ligase (436 aa).

One can recognise an ATP-grasp domain in the interval 106–318; that stretch reads RKLFEDYRIP…MLEICEGIVD (213 aa). ATP is bound at residue 133 to 196; that stretch reads MEDFDSEAVV…EERVVGEEFT (64 aa). The Mg(2+) site is built by Q276, E288, and N290. Residues Q276, E288, and N290 each coordinate Mn(2+).

The protein belongs to the GARS family. Mg(2+) is required as a cofactor. Mn(2+) serves as cofactor.

It carries out the reaction 5-phospho-beta-D-ribosylamine + glycine + ATP = N(1)-(5-phospho-beta-D-ribosyl)glycinamide + ADP + phosphate + H(+). Its pathway is purine metabolism; IMP biosynthesis via de novo pathway; N(1)-(5-phospho-D-ribosyl)glycinamide from 5-phospho-alpha-D-ribose 1-diphosphate: step 2/2. The chain is Phosphoribosylamine--glycine ligase from Methanothermobacter thermautotrophicus (strain ATCC 29096 / DSM 1053 / JCM 10044 / NBRC 100330 / Delta H) (Methanobacterium thermoautotrophicum).